The sequence spans 189 residues: Prostaglandin-H2 D-isomerase (189 aa).

The N-terminal stretch at 1–24 (MAALRMLWMGLVLLGLLGFPQTPA) is a signal peptide. Residue Gln-25 is modified to Pyrrolidone carboxylic acid. An N-linked (GlcNAc...) asparagine glycan is attached at Asn-51. Cys-65 serves as the catalytic Nucleophile. Asn-78 is a glycosylation site (N-linked (GlcNAc...) asparagine). The cysteines at positions 89 and 186 are disulfide-linked.

This sequence belongs to the calycin superfamily. Lipocalin family. Monomer. In terms of tissue distribution, abundant in the brain and CNS, where it is expressed in tissues of the blood-brain barrier and secreted into the cerebro-spinal fluid. In the male reproductive system, it is expressed in the testis, efferent ducts and epididymis, and is secreted into the seminal fluid. In the eye, it is expressed in the pigmented epithelium of the retina and the nonpigmented epithelium of the ciliary body, and secreted into the aqueous humor. Low levels detected in various tissue fluids such as serum, normal urine, ascitic fluid and tear fluid. Also found in a number of other organs including the ear, heart and lung.

The protein localises to the rough endoplasmic reticulum. Its subcellular location is the nucleus membrane. It is found in the golgi apparatus. It localises to the cytoplasm. The protein resides in the perinuclear region. The protein localises to the secreted. The catalysed reaction is prostaglandin H2 = prostaglandin D2. In terms of biological role, catalyzes the conversion of PGH2 to PGD2, a prostaglandin involved in smooth muscle contraction/relaxation and a potent inhibitor of platelet aggregation. Involved in a variety of CNS functions, such as sedation, NREM sleep and PGE2-induced allodynia, and may have an anti-apoptotic role in oligodendrocytes. Binds small non-substrate lipophilic molecules, including biliverdin, bilirubin, retinal, retinoic acid and thyroid hormone, and may act as a scavenger for harmful hydrophobic molecules and as a secretory retinoid and thyroid hormone transporter. Possibly involved in development and maintenance of the blood-brain, blood-retina, blood-aqueous humor and blood-testis barrier. It is likely to play important roles in both maturation and maintenance of the central nervous system and male reproductive system. Involved in PLA2G3-dependent maturation of mast cells. PLA2G3 is secreted by immature mast cells and acts on nearby fibroblasts upstream to PTDGS to synthesize PGD2, which in turn promotes mast cell maturation and degranulation via PTGDR. The protein is Prostaglandin-H2 D-isomerase (Ptgds) of Mus musculus (Mouse).